The primary structure comprises 677 residues: uncharacterized protein (677 aa).

Residues 1-87 (MGRHSKPDPE…PTGAEPIAAA (87 aa)) form a disordered region. Residues 17–29 (SDGHAAEQQHWED) are compositionally biased toward basic and acidic residues. Residues 51–64 (GHYSAVGGYSASGS) show a composition bias toward low complexity. The next 4 membrane-spanning stretches (helical) occupy residues 115 to 135 (VSIGVIVALVAVVVMVAGVIL), 192 to 212 (VAVAVTSAGSDAVINGFIGKW), 313 to 333 (EAVAAASAPAGAPATAGIGAV), and 474 to 494 (ATLADTMVTASAGVAATIMLD).

The protein resides in the cell membrane. This is an uncharacterized protein from Mycobacterium tuberculosis (strain CDC 1551 / Oshkosh).